We begin with the raw amino-acid sequence, 59 residues long: DNA-directed RNA polymerase subunit Rpo6 (59 aa).

This sequence belongs to the archaeal Rpo6/eukaryotic RPB6 RNA polymerase subunit family. As to quaternary structure, part of the RNA polymerase complex.

It localises to the cytoplasm. It catalyses the reaction RNA(n) + a ribonucleoside 5'-triphosphate = RNA(n+1) + diphosphate. Functionally, DNA-dependent RNA polymerase (RNAP) catalyzes the transcription of DNA into RNA using the four ribonucleoside triphosphates as substrates. The sequence is that of DNA-directed RNA polymerase subunit Rpo6 from Halorubrum lacusprofundi (strain ATCC 49239 / DSM 5036 / JCM 8891 / ACAM 34).